The primary structure comprises 600 residues: Tripeptidyl-peptidase 1 (600 aa).

Residues 1-22 form the signal peptide; that stretch reads MNIKFNLIIIILFILFISNVNC. The propeptide at 23-220 is removed in mature form; the sequence is KKIKNKKHLT…GGGGKVNGIG (198 aa). 3 N-linked (GlcNAc...) asparagine glycosylation sites follow: Asn91, Asn259, and Asn266. Residues 248-600 form the Peptidase S53 domain; the sequence is YLSPDLIRKE…FDELVKYCLE (353 aa). Catalysis depends on charge relay system residues Glu318 and Asp322. Cysteines 411 and 570 form a disulfide. N-linked (GlcNAc...) asparagine glycans are attached at residues Asn475 and Asn483. The Charge relay system role is filled by Ser514. Residues Asp559, Ile560, Gly579, and Asp581 each coordinate Ca(2+).

Monomer. The cofactor is Ca(2+). Activated by autocatalytic proteolytical processing upon acidification. N-glycosylation is required for processing and activity.

It is found in the secreted. The catalysed reaction is Release of an N-terminal tripeptide from a polypeptide, but also has endopeptidase activity.. Serine protease with tripeptidyl-peptidase I activity. In Dictyostelium discoideum (Social amoeba), this protein is Tripeptidyl-peptidase 1 (tpp1).